Reading from the N-terminus, the 1086-residue chain is Fused isobutyryl-CoA mutase (1086 aa).

Residues H10 to E140 enclose the B12-binding domain. H23 contributes to the adenosylcob(III)alamin binding site. Residues L153–K407 form a GTPase chaperone MeaI region. A GTP-binding site is contributed by G210 to S215. Positions 214, 238, 239, and 252 each coordinate Mg(2+). Residue R255 coordinates GTP. E300 and T301 together coordinate Mg(2+). GTP is bound at residue N347 to E350. The linker stretch occupies residues K408–P570. 7 residues coordinate substrate: F578, R613, R719, Y763, S812, R847, and K852. GTP is bound by residues E964 and N1085.

This sequence belongs to the IcmF family. As to quaternary structure, homodimer. Requires adenosylcob(III)alamin as cofactor. The cofactor is Mg(2+).

The catalysed reaction is 2-methylpropanoyl-CoA = butanoyl-CoA. It carries out the reaction 3-methylbutanoyl-CoA = 2,2-dimethylpropanoyl-CoA. It catalyses the reaction GTP + H2O = GDP + phosphate + H(+). Catalyzes the reversible interconversion of isobutyryl-CoA and n-butyryl-CoA, and to a lesser extent, of pivalyl-CoA and isovaleryl-CoA, using radical chemistry. Also exhibits GTPase activity, associated with its G-protein domain (MeaI) that functions as a chaperone that assists cofactor delivery and proper holo-enzyme assembly. Also displays ATPase activity. Is not able to convert 3-hydroxybutyryl-CoA to 2-hydroxyisobutyryl-CoA. Does not exhibit methylmalonyl-CoA mutase (MCM) activity. In Geobacillus kaustophilus (strain HTA426), this protein is Fused isobutyryl-CoA mutase.